The primary structure comprises 653 residues: Glyceraldehyde-3-phosphate:ferredoxin oxidoreductase (653 aa).

Arginine 70, glycine 89, arginine 196, alanine 197, glycine 199, and arginine 206 together coordinate tungstopterin. Residues cysteine 333 and cysteine 337 each contribute to the [4Fe-4S] cluster site. Residues aspartate 378, aspartate 383, and aspartate 544 each coordinate tungstopterin. Cysteine 549 provides a ligand contact to [4Fe-4S] cluster.

This sequence belongs to the AOR/FOR family. Monomer. It depends on [4Fe-4S] cluster as a cofactor. Tungstopterin is required as a cofactor.

The catalysed reaction is D-glyceraldehyde 3-phosphate + 2 oxidized [2Fe-2S]-[ferredoxin] + H2O = (2R)-3-phosphoglycerate + 2 reduced [2Fe-2S]-[ferredoxin] + 3 H(+). Sensitive to oxygen. Activity increased by 58%-93% in the presence of acetyl phosphate, 3-phosphoglycerate or 2,3-bisphosphoglycerate at 10 mM concentration. Inhibited by up to 25% in the presence of crotonaldehyde or formaldehyde at 10 mM concentration. Inhibited by up to 50% by sodium dithionate. 3.5-fold increase in activity observed by addition of potassium phosphate or sodium arsenate at 200 mM concentration. Activity enhanced by potassium chloride, sodium citrate or sodium sulfate at 200 mM concentration. Its function is as follows. Catalyzes the oxidation of glyceraldehyde-3-phosphate to 3-phosphoglycerate. Uses ferredoxin as electron acceptor. In vitro can also use benzyl viologen, but not NADP or NAD, as electron acceptor. Probably acts as a glycolytic enzyme in place of glyceraldehyde-3-phosphate dehydrogenase (GAPDH) and phosphoglycerate kinase (PGK) in an unusual Emden-Meyerhof glycolysis. The sequence is that of Glyceraldehyde-3-phosphate:ferredoxin oxidoreductase from Pyrococcus furiosus (strain ATCC 43587 / DSM 3638 / JCM 8422 / Vc1).